Consider the following 223-residue polypeptide: Deoxyribose-phosphate aldolase (223 aa).

Asp89 (proton donor/acceptor) is an active-site residue. The active-site Schiff-base intermediate with acetaldehyde is the Lys154. The active-site Proton donor/acceptor is Lys183.

Belongs to the DeoC/FbaB aldolase family. DeoC type 1 subfamily.

Its subcellular location is the cytoplasm. The catalysed reaction is 2-deoxy-D-ribose 5-phosphate = D-glyceraldehyde 3-phosphate + acetaldehyde. The protein operates within carbohydrate degradation; 2-deoxy-D-ribose 1-phosphate degradation; D-glyceraldehyde 3-phosphate and acetaldehyde from 2-deoxy-alpha-D-ribose 1-phosphate: step 2/2. In terms of biological role, catalyzes a reversible aldol reaction between acetaldehyde and D-glyceraldehyde 3-phosphate to generate 2-deoxy-D-ribose 5-phosphate. The polypeptide is Deoxyribose-phosphate aldolase (Thermoanaerobacter pseudethanolicus (strain ATCC 33223 / 39E) (Clostridium thermohydrosulfuricum)).